A 563-amino-acid chain; its full sequence is Probable CoA ligase CCL11 (563 aa).

ATP-binding positions include 195-203, 328-333, Asp426, 438-441, and Lys534; these read TSGTTSSPK, HGYGMT, and IKDR. The interval 263 to 328 is SBD1; that stretch reads DGEIIFNLIR…TESLGFVISH (66 aa). Residues 329–405 are SBD2; it reads GYGMTEMLGV…LKGSSIMLGY (77 aa).

Belongs to the ATP-dependent AMP-binding enzyme family.

Its subcellular location is the cytoplasm. It localises to the cytosol. The sequence is that of Probable CoA ligase CCL11 from Humulus lupulus (European hop).